We begin with the raw amino-acid sequence, 214 residues long: Probable transaldolase (214 aa).

Lysine 83 (schiff-base intermediate with substrate) is an active-site residue.

It belongs to the transaldolase family. Type 3B subfamily.

Its subcellular location is the cytoplasm. The catalysed reaction is D-sedoheptulose 7-phosphate + D-glyceraldehyde 3-phosphate = D-erythrose 4-phosphate + beta-D-fructose 6-phosphate. Its pathway is carbohydrate degradation; pentose phosphate pathway; D-glyceraldehyde 3-phosphate and beta-D-fructose 6-phosphate from D-ribose 5-phosphate and D-xylulose 5-phosphate (non-oxidative stage): step 2/3. Its function is as follows. Transaldolase is important for the balance of metabolites in the pentose-phosphate pathway. This chain is Probable transaldolase, found in Leptospira borgpetersenii serovar Hardjo-bovis (strain JB197).